We begin with the raw amino-acid sequence, 326 residues long: Undecaprenyl-phosphate 4-deoxy-4-formamido-L-arabinose transferase (326 aa).

The next 2 helical transmembrane spans lie at 234 to 254 and 269 to 289; these read LLSI…ILLI and VFTL…GMGL.

Belongs to the glycosyltransferase 2 family.

It localises to the cell inner membrane. It carries out the reaction UDP-4-deoxy-4-formamido-beta-L-arabinose + di-trans,octa-cis-undecaprenyl phosphate = 4-deoxy-4-formamido-alpha-L-arabinopyranosyl di-trans,octa-cis-undecaprenyl phosphate + UDP. It participates in glycolipid biosynthesis; 4-amino-4-deoxy-alpha-L-arabinose undecaprenyl phosphate biosynthesis; 4-amino-4-deoxy-alpha-L-arabinose undecaprenyl phosphate from UDP-4-deoxy-4-formamido-beta-L-arabinose and undecaprenyl phosphate: step 1/2. Its pathway is bacterial outer membrane biogenesis; lipopolysaccharide biosynthesis. Catalyzes the transfer of 4-deoxy-4-formamido-L-arabinose from UDP to undecaprenyl phosphate. The modified arabinose is attached to lipid A and is required for resistance to polymyxin and cationic antimicrobial peptides. This is Undecaprenyl-phosphate 4-deoxy-4-formamido-L-arabinose transferase from Aeromonas hydrophila subsp. hydrophila (strain ATCC 7966 / DSM 30187 / BCRC 13018 / CCUG 14551 / JCM 1027 / KCTC 2358 / NCIMB 9240 / NCTC 8049).